Here is a 298-residue protein sequence, read N- to C-terminus: ADP/ATP translocase 2 (298 aa).

Residue Met-1 is modified to N-acetylmethionine. Residues Met-1–Ser-7 are Mitochondrial intermembrane-facing. N-acetylthreonine; in ADP/ATP translocase 2, N-terminally processed is present on Thr-2. The Solcar 1 repeat unit spans residues Val-6–Ile-98. Ser-7 carries the phosphoserine modification. The chain crosses the membrane as a helical span at residues Phe-8–Gln-37. Position 23 is an N6-malonyllysine (Lys-23). The Mitochondrial matrix portion of the chain corresponds to Val-38–Asn-74. Lys-43 is modified (N6-succinyllysine). Position 52 is an N6,N6,N6-trimethyllysine; alternate (Lys-52). Lys-52 is modified (N6,N6-dimethyllysine; alternate). Lys-52 carries the N6-methyllysine; alternate modification. The chain crosses the membrane as a helical span at residues Leu-75–Phe-99. 2 residues coordinate ADP: Arg-80 and Lys-92. Lys-92 and Lys-96 each carry N6-malonyllysine. The Mitochondrial intermembrane segment spans residues Leu-100–Phe-109. Lys-105 carries the post-translational modification N6-acetyllysine; alternate. N6-succinyllysine; alternate is present on Lys-105. The chain crosses the membrane as a helical span at residues Trp-110–Phe-130. Solcar repeat units follow at residues Arg-111–Met-201 and Ile-212–Phe-297. The Mitochondrial matrix segment spans residues Val-131 to Asn-178. At Lys-147 the chain carries N6-methyllysine; alternate. Lys-147 carries the post-translational modification N6-acetyllysine; alternate. N6-succinyllysine; alternate is present on Lys-147. Lys-147 carries the N6-malonyllysine; alternate modification. N6-acetyllysine is present on residues Lys-163 and Lys-166. A helical membrane pass occupies residues Val-179 to Lys-199. Over Gly-200–Ile-210 the chain is Mitochondrial intermembrane. Residues Phe-211–Phe-231 traverse the membrane as a helical segment. Over Asp-232–Gly-273 the chain is Mitochondrial matrix. Residue Arg-235 coordinates ADP. The segment at Arg-235–Met-240 is important for transport activity. Positions Arg-235–Met-240 match the Nucleotide carrier signature motif motif. Lys-268 is modified (N6-acetyllysine; alternate). At Lys-268 the chain carries N6-succinyllysine; alternate. Residues Ala-274 to Tyr-291 form a helical membrane-spanning segment. Residues Asp-292 to Thr-298 are Mitochondrial intermembrane-facing.

This sequence belongs to the mitochondrial carrier (TC 2.A.29) family. In terms of assembly, monomer. Component of the MMXD complex, which includes CIAO1, ERCC2, CIAO2B, MMS19 and SLC25A5/ANT2. Interacts with AK4. Interacts with TIMM44; leading to inhibit the presequence translocase TIMM23, thereby promoting stabilization of PINK1. Post-translationally, trimethylated by ANTKMT at Lys-52.

It is found in the mitochondrion inner membrane. The protein resides in the membrane. It carries out the reaction ADP(in) + ATP(out) = ADP(out) + ATP(in). It catalyses the reaction H(+)(in) = H(+)(out). Its activity is regulated as follows. The matrix-open state (m-state) is inhibited by the membrane-permeable bongkrekic acid (BKA). The cytoplasmic-open state (c-state) is inhibited by the membrane-impermeable toxic inhibitor carboxyatractyloside (CATR). Proton transporter activity is inhibited by ADP:ATP antiporter activity. Its function is as follows. ADP:ATP antiporter that mediates import of ADP into the mitochondrial matrix for ATP synthesis, and export of ATP out to fuel the cell. Cycles between the cytoplasmic-open state (c-state) and the matrix-open state (m-state): operates by the alternating access mechanism with a single substrate-binding site intermittently exposed to either the cytosolic (c-state) or matrix (m-state) side of the inner mitochondrial membrane. In addition to its ADP:ATP antiporter activity, also involved in mitochondrial uncoupling and mitochondrial permeability transition pore (mPTP) activity. Plays a role in mitochondrial uncoupling by acting as a proton transporter: proton transport uncouples the proton flows via the electron transport chain and ATP synthase to reduce the efficiency of ATP production and cause mitochondrial thermogenesis. Proton transporter activity is inhibited by ADP:ATP antiporter activity, suggesting that SLC25A5/ANT2 acts as a master regulator of mitochondrial energy output by maintaining a delicate balance between ATP production (ADP:ATP antiporter activity) and thermogenesis (proton transporter activity). Proton transporter activity requires free fatty acids as cofactor, but does not transport it. Probably mediates mitochondrial uncoupling in tissues that do not express UCP1. Also plays a key role in mPTP opening, a non-specific pore that enables free passage of the mitochondrial membranes to solutes of up to 1.5 kDa, and which contributes to cell death. It is however unclear if SLC25A5/ANT2 constitutes a pore-forming component of mPTP or regulates it. Acts as a regulator of mitophagy independently of ADP:ATP antiporter activity: promotes mitophagy via interaction with TIMM44, leading to inhibit the presequence translocase TIMM23, thereby promoting stabilization of PINK1. As part of the mitotic spindle-associated MMXD complex it may play a role in chromosome segregation. The protein is ADP/ATP translocase 2 of Bos taurus (Bovine).